A 533-amino-acid chain; its full sequence is Flavin-containing monooxygenase 5 (533 aa).

Position 5 is a dimethylated arginine (Arg-5). Residues Gly-10–Ser-14, Glu-33, and Leu-41–Trp-42 contribute to the FAD site. Position 54 is a phosphoserine (Ser-54). The residue at position 56 (Tyr-56) is a Phosphotyrosine. Ser-58 is subject to Phosphoserine. Asn-62–Thr-63 serves as a coordination point for FAD. Position 196-199 (Ser-196–Asp-199) interacts with NADP(+). At Thr-284 the chain carries Phosphothreonine. Ser-401 is subject to Phosphoserine. A helical transmembrane segment spans residues Leu-513–Phe-533.

Belongs to the FMO family. It depends on FAD as a cofactor.

It is found in the microsome membrane. The protein resides in the endoplasmic reticulum membrane. The enzyme catalyses N,N-dimethylaniline + NADPH + O2 + H(+) = N,N-dimethylaniline N-oxide + NADP(+) + H2O. It catalyses the reaction NADPH + O2 + H(+) = H2O2 + NADP(+). The catalysed reaction is heptan-2-one + NADPH + O2 + H(+) = pentyl acetate + NADP(+) + H2O. It carries out the reaction octan-3-one + NADPH + O2 + H(+) = pentyl propanoate + NADP(+) + H2O. The enzyme catalyses octan-3-one + NADPH + O2 + H(+) = ethyl hexanoate + NADP(+) + H2O. It catalyses the reaction hexan-3-one + NADPH + O2 + H(+) = ethyl butanoate + NADP(+) + H2O. The catalysed reaction is hexan-3-one + NADPH + O2 + H(+) = propyl propanoate + NADP(+) + H2O. It carries out the reaction heptan-4-one + NADPH + O2 + H(+) = propyl butanoate + NADP(+) + H2O. The enzyme catalyses (2E)-geranial + NADPH + O2 + H(+) = (1E)-2,6-dimethylhepta-1,5-dien-1-yl formate + NADP(+) + H2O. It catalyses the reaction sulcatone + NADPH + O2 + H(+) = 4-methylpent-3-en-1-yl acetate + NADP(+) + H2O. Its function is as follows. Acts as a Baeyer-Villiger monooxygenase on a broad range of substrates. Catalyzes the insertion of an oxygen atom into a carbon-carbon bond adjacent to a carbonyl, which converts ketones to esters. Active on diverse carbonyl compounds, whereas soft nucleophiles are mostly non- or poorly reactive. In contrast with other forms of FMO it is non- or poorly active on 'classical' substrates such as drugs, pesticides, and dietary components containing soft nucleophilic heteroatoms. Able to oxidize drug molecules bearing a carbonyl group on an aliphatic chain, such as nabumetone and pentoxifylline. Also, in the absence of substrates, shows slow but yet significant NADPH oxidase activity. Acts as a positive modulator of cholesterol biosynthesis as well as glucose homeostasis, promoting metabolic aging via pleiotropic effects. This is Flavin-containing monooxygenase 5 from Rattus norvegicus (Rat).